We begin with the raw amino-acid sequence, 523 residues long: UDP-N-acetylmuramyl-tripeptide synthetase (523 aa).

S38 provides a ligand contact to UDP-N-acetyl-alpha-D-muramoyl-L-alanyl-D-glutamate. 116–122 (GTKGKTT) is an ATP binding site. UDP-N-acetyl-alpha-D-muramoyl-L-alanyl-D-glutamate contacts are provided by residues 162–163 (TT), S189, and R197. K231 carries the post-translational modification N6-carboxylysine.

It belongs to the MurCDEF family. MurE subfamily. Carboxylation is probably crucial for Mg(2+) binding and, consequently, for the gamma-phosphate positioning of ATP.

Its subcellular location is the cytoplasm. Its pathway is cell wall biogenesis; peptidoglycan biosynthesis. Its function is as follows. Catalyzes the addition of an amino acid to the nucleotide precursor UDP-N-acetylmuramoyl-L-alanyl-D-glutamate (UMAG) in the biosynthesis of bacterial cell-wall peptidoglycan. This is UDP-N-acetylmuramyl-tripeptide synthetase from Lactobacillus acidophilus (strain ATCC 700396 / NCK56 / N2 / NCFM).